The following is a 1407-amino-acid chain: Clustered mitochondria protein (1407 aa).

Positions Met-1–Arg-12 are enriched in basic residues. 2 disordered regions span residues Met-1–Ala-36 and Ile-83–Gly-103. Positions Ala-14–Asp-24 are enriched in polar residues. The Clu domain maps to Pro-384 to Thr-670. Residues Ile-724 to Ser-760 form a disordered region. Positions Gly-730–Ala-747 are enriched in polar residues. TPR repeat units follow at residues Ala-1025–Val-1058, Ala-1067–Cys-1100, Ala-1109–Ser-1142, Ala-1151–Leu-1184, and Ala-1193–Gln-1226. The disordered stretch occupies residues Val-1358–Lys-1407. A compositionally biased stretch (basic and acidic residues) spans Lys-1362 to Lys-1382.

This sequence belongs to the CLU family.

The protein localises to the cytoplasm. Its function is as follows. mRNA-binding protein involved in proper cytoplasmic distribution of mitochondria. Together with REC2, REC3 and FMT/CLU, contributes to the establishment of the cellular volume devoted to the chloroplast compartment. The chain is Clustered mitochondria protein from Arabidopsis thaliana (Mouse-ear cress).